A 254-amino-acid polypeptide reads, in one-letter code: 4-hydroxy-tetrahydrodipicolinate reductase (254 aa).

NAD(+) is bound by residues 8 to 13 (GCSGKM), aspartate 35, 86 to 88 (CST), and 110 to 113 (SANM). Residue histidine 143 is the Proton donor/acceptor of the active site. Histidine 144 contacts (S)-2,3,4,5-tetrahydrodipicolinate. Lysine 147 (proton donor) is an active-site residue. 153–154 (GT) contacts (S)-2,3,4,5-tetrahydrodipicolinate.

It belongs to the DapB family.

The protein localises to the cytoplasm. It catalyses the reaction (S)-2,3,4,5-tetrahydrodipicolinate + NAD(+) + H2O = (2S,4S)-4-hydroxy-2,3,4,5-tetrahydrodipicolinate + NADH + H(+). The catalysed reaction is (S)-2,3,4,5-tetrahydrodipicolinate + NADP(+) + H2O = (2S,4S)-4-hydroxy-2,3,4,5-tetrahydrodipicolinate + NADPH + H(+). It functions in the pathway amino-acid biosynthesis; L-lysine biosynthesis via DAP pathway; (S)-tetrahydrodipicolinate from L-aspartate: step 4/4. In terms of biological role, catalyzes the conversion of 4-hydroxy-tetrahydrodipicolinate (HTPA) to tetrahydrodipicolinate. The chain is 4-hydroxy-tetrahydrodipicolinate reductase from Clostridium perfringens (strain ATCC 13124 / DSM 756 / JCM 1290 / NCIMB 6125 / NCTC 8237 / Type A).